Consider the following 66-residue polypeptide: MAKGKDVRGIVILQCTSCVRNDFNKESRGTSRYITQKNRHNTPSRLELRKFCPYCYKHTIHGEIKK.

This sequence belongs to the bacterial ribosomal protein bL33 family.

The protein resides in the plastid. Its subcellular location is the chloroplast. The chain is Large ribosomal subunit protein bL33c from Liriodendron tulipifera (Tuliptree).